A 448-amino-acid chain; its full sequence is tRNA modification GTPase MnmE (448 aa).

(6S)-5-formyl-5,6,7,8-tetrahydrofolate-binding residues include arginine 22, glutamate 83, and arginine 122. The TrmE-type G domain occupies 219–369 (GVKTVIVGRP…LESEILKTLK (151 aa)). Asparagine 229 contacts K(+). GTP is bound by residues 229-234 (NVGKSS), 248-254 (SDIAGTT), and 273-276 (DTAG). Residue serine 233 coordinates Mg(2+). Serine 248, isoleucine 250, and threonine 253 together coordinate K(+). Threonine 254 contacts Mg(2+). Residue lysine 448 participates in (6S)-5-formyl-5,6,7,8-tetrahydrofolate binding.

This sequence belongs to the TRAFAC class TrmE-Era-EngA-EngB-Septin-like GTPase superfamily. TrmE GTPase family. As to quaternary structure, homodimer. Heterotetramer of two MnmE and two MnmG subunits. The cofactor is K(+).

It is found in the cytoplasm. Exhibits a very high intrinsic GTPase hydrolysis rate. Involved in the addition of a carboxymethylaminomethyl (cmnm) group at the wobble position (U34) of certain tRNAs, forming tRNA-cmnm(5)s(2)U34. This is tRNA modification GTPase MnmE from Acholeplasma laidlawii (strain PG-8A).